Reading from the N-terminus, the 544-residue chain is Membrane protein insertase YidC (544 aa).

The disordered stretch occupies residues 29–58 (TPKADPSATTQTLNPTSSESEDYVPTSSDS). A compositionally biased stretch (polar residues) spans 35 to 46 (SATTQTLNPTSS). 3 consecutive transmembrane segments (helical) span residues 341 to 361 (FVLL…IIAI), 421 to 441 (GGCF…YVFL), and 499 to 519 (PVIF…YWLV).

It belongs to the OXA1/ALB3/YidC family. Type 1 subfamily. As to quaternary structure, interacts with the Sec translocase complex via SecD. Specifically interacts with transmembrane segments of nascent integral membrane proteins during membrane integration.

It localises to the cell inner membrane. Required for the insertion and/or proper folding and/or complex formation of integral membrane proteins into the membrane. Involved in integration of membrane proteins that insert both dependently and independently of the Sec translocase complex, as well as at least some lipoproteins. Aids folding of multispanning membrane proteins. In Pseudoalteromonas translucida (strain TAC 125), this protein is Membrane protein insertase YidC.